The chain runs to 207 residues: NADH-quinone oxidoreductase subunit A (207 aa).

3 helical membrane passes run 6 to 26, 62 to 82, and 87 to 107; these read LSAI…LVVP, LVAI…AYAV, and AGWL…IGLV.

This sequence belongs to the complex I subunit 3 family. As to quaternary structure, NDH-1 is composed of 14 different subunits. Subunits NuoA, H, J, K, L, M, N constitute the membrane sector of the complex.

It localises to the cell inner membrane. The enzyme catalyses a quinone + NADH + 5 H(+)(in) = a quinol + NAD(+) + 4 H(+)(out). In terms of biological role, NDH-1 shuttles electrons from NADH, via FMN and iron-sulfur (Fe-S) centers, to quinones in the respiratory chain. The immediate electron acceptor for the enzyme in this species is believed to be ubiquinone. Couples the redox reaction to proton translocation (for every two electrons transferred, four hydrogen ions are translocated across the cytoplasmic membrane), and thus conserves the redox energy in a proton gradient. The protein is NADH-quinone oxidoreductase subunit A of Psychrobacter cryohalolentis (strain ATCC BAA-1226 / DSM 17306 / VKM B-2378 / K5).